Reading from the N-terminus, the 651-residue chain is Intraflagellar transport protein 70A (651 aa).

TPR repeat units lie at residues 8–41, 42–75, 140–173, 175–207, 372–405, 410–443, and 445–478; these read DGEYTATIYRLIKEARYGEAIQVLSNELQKQYRS, RAGLSLLGYCYYQIQDFVNAADCYEQLIQISPEV, PESEINMGCLLYKEGHYEEACKKFITAMQVMGYK, DLSFNIALCYYSMKQYAPALKHIADIIERGIRE, LTEQMRKLTKQVQEARHNRDDEAVKKAVNEYDET, IPVLMAQAKIYWNMENYQMVEKIFRKSVEFCNEH, and IWKLNVAHVLFMQDNKYKEAIGFYEPIVKKHYDN. A coiled-coil region spans residues 494–521; sequence YIMTSQNEEAEELMRKIEKEEEQIAYEN. The TPR 8 repeat unit spans residues 530 to 563; the sequence is CIVNLVIGTLYCAKGNYEFGISRVIKSLEPYNKK.

It belongs to the TTC30/dfy-1/fleer family.

It is found in the cell projection. It localises to the cilium. Functionally, required for polyglutamylation of axonemal tubulin. Plays a role in anterograde intraflagellar transport (IFT), the process by which cilia precursors are transported from the base of the cilium to the site of their incorporation at the tip. The polypeptide is Intraflagellar transport protein 70A (ift70a) (Xenopus laevis (African clawed frog)).